Reading from the N-terminus, the 419-residue chain is GTPase Obg (419 aa).

The 156-residue stretch at 1–156 folds into the Obg domain; that stretch reads MRFVDYVSIE…FYLDLQLKVM (156 aa). The OBG-type G domain maps to 157 to 334; the sequence is ADIGLVGKPN…LGENQKKLEI (178 aa). GTP is bound by residues 163–170, 188–192, 209–212, 278–281, and 315–317; these read GKPNAGKS, FTTLV, DLPG, NKCD, and NII. Residues Ser170 and Thr190 each coordinate Mg(2+). The OCT domain maps to 342–419; it reads IEFNLKAPFL…RIYEFEFHWN (78 aa).

Belongs to the TRAFAC class OBG-HflX-like GTPase superfamily. OBG GTPase family. In terms of assembly, monomer. Mg(2+) serves as cofactor.

The protein localises to the cytoplasm. An essential GTPase which binds GTP, GDP and possibly (p)ppGpp with moderate affinity, with high nucleotide exchange rates and a fairly low GTP hydrolysis rate. Plays a role in control of the cell cycle, stress response, ribosome biogenesis and in those bacteria that undergo differentiation, in morphogenesis control. The chain is GTPase Obg from Mesomycoplasma hyopneumoniae (strain 7448) (Mycoplasma hyopneumoniae).